The primary structure comprises 101 residues: Small ribosomal subunit protein uS14 (101 aa).

This sequence belongs to the universal ribosomal protein uS14 family. As to quaternary structure, part of the 30S ribosomal subunit. Contacts proteins S3 and S10.

In terms of biological role, binds 16S rRNA, required for the assembly of 30S particles and may also be responsible for determining the conformation of the 16S rRNA at the A site. The chain is Small ribosomal subunit protein uS14 from Xylella fastidiosa (strain 9a5c).